A 645-amino-acid chain; its full sequence is Putative palmitoyltransferase ZDHHC13 (645 aa).

The interval 1–73 is disordered; the sequence is MDWSEGDGSH…KSSHPEDSSS (73 aa). The Cytoplasmic segment spans residues 1 to 314; sequence MDWSEGDGSH…ACLKLLNRYK (314 aa). Over residues 7–20 the composition is skewed to basic and acidic residues; it reads DGSHSHGHMGDSCH. The segment covering 23–33 has biased composition (basic residues); it reads GGGHSHGHGHS. Residues 34–43 show a composition bias toward gly residues; it reads HGGSGFGGFM. 5 ANK repeats span residues 104–133, 138–167, 171–200, 204–234, and 239–268; these read ENVT…VIDQ, LNST…DPSL, EGYR…EVDL, NGQT…SVNA, and NRNS…SVDM. The helical transmembrane segment at 315–335 threads the bilayer; sequence VCLQSVFSVVVVGAFGAILDM. Position 336 (Arg-336) is a topological domain, lumenal. A helical transmembrane segment spans residues 337–357; it reads TESWLLKGILLACIMAVINLA. Residues 358–369 are Cytoplasmic-facing; it reads SRQLATVAVRSL. The chain crosses the membrane as a helical span at residues 370 to 390; sequence IPSTGLIASVFWMVVTWVLWF. Residues 391–394 lie on the Lumenal side of the membrane; it reads LPDE. The helical transmembrane segment at 395 to 415 threads the bilayer; the sequence is PSAAVQMLFTVNITAVLYYYI. Topologically, residues 416–492 are cytoplasmic; that stretch reads RSCRTDPGHV…NGCIGARNHP (77 aa). Residues 449 to 499 enclose the DHHC domain; that stretch reads IFCTSCMMRKPMRANHCFSCNACVAKQDHHSIWINGCIGARNHPFFVLFLV. The helical transmembrane segment at 493-513 threads the bilayer; that stretch reads FFVLFLVALNFLCIWMFYGSI. Residues 514–542 are Lumenal-facing; that stretch reads TYWSRHCPLHYSEEGIWGALTALMGCSPW. The chain crosses the membrane as a helical span at residues 543-563; that stretch reads LLYVFCFVFFHTTWASILLVL. At 564 to 645 the chain is on the cytoplasmic side; it reads QLYQIAFLGL…RDMFSSPDAV (82 aa).

This sequence belongs to the DHHC palmitoyltransferase family. AKR/ZDHHC17 subfamily.

The protein resides in the golgi apparatus membrane. It is found in the cytoplasmic vesicle membrane. Its function is as follows. Putative palmitoyltransferase that could catalyze the addition of palmitate onto various protein substrates. This is Putative palmitoyltransferase ZDHHC13 from Danio rerio (Zebrafish).